A 428-amino-acid chain; its full sequence is C4-dicarboxylate transport protein (428 aa).

The next 8 membrane-spanning stretches (helical) occupy residues 8-28 (VLYV…HLYP), 44-64 (LIKM…IAGM), 78-98 (LLYF…ATHI), 148-168 (GEIL…AHLG), 184-204 (VLFG…FGAM), 222-242 (LIGT…GAIA), 307-327 (IYMT…LTWM), and 355-375 (AATL…ILGI).

The protein belongs to the dicarboxylate/amino acid:cation symporter (DAACS) (TC 2.A.23) family.

The protein localises to the cell inner membrane. Its function is as follows. Responsible for the transport of dicarboxylates such as succinate, fumarate, and malate from the periplasm across the membrane. The chain is C4-dicarboxylate transport protein from Burkholderia thailandensis (strain ATCC 700388 / DSM 13276 / CCUG 48851 / CIP 106301 / E264).